A 129-amino-acid chain; its full sequence is uncharacterized protein (129 aa).

A helical transmembrane segment spans residues 103–125 (AISSAFQYGLSTSNFFFIFLYIF).

It localises to the membrane. This is an uncharacterized protein from Acanthamoeba polyphaga (Amoeba).